Here is a 462-residue protein sequence, read N- to C-terminus: MNTNIKTREYTTISEVSGPLMVVEGVEGVGYNEIVDIETPNGEKRSGQVLEVTDDVAVIQVFEGTTDLNTKNTKARFTGQTAKIGVSRDMMGRMFNGIGKPIDGGPEIIPDEELDINGSPMNPASREFPEEFIQTGISTIDGMNTLVRGQKLPIFSGSGLPHNELAAQIARQAKVLGDDAEFAVIFAAMGITHEEANFFMRDFERTGALEKVTVFMNLADDPAIERILTPKMALTTAEYFAFTLGMQVLVILTDMTNYCEALREISAARDEVPGRRGYPGYMYTDLANIYERAGRIDGKEGSITQMPILVMPQDDITHPIPDLTGYITEGQIVLSRELNRKGIYPPVDVLPSLSRLMSGGIGGDKTRDDHSGVSDQLYSAYAGGRELRDLVAVVGEEALTERDQKFLEFAEEFEGKFITQSKDEDRSIIETLDLGWDLLKILPKSELKRVKEEFIEQYLPKE.

Belongs to the ATPase alpha/beta chains family. As to quaternary structure, has multiple subunits with at least A(3), B(3), C, D, E, F, H, I and proteolipid K(x).

The protein localises to the cell membrane. Its function is as follows. Component of the A-type ATP synthase that produces ATP from ADP in the presence of a proton gradient across the membrane. The B chain is a regulatory subunit. The protein is A-type ATP synthase subunit B of Methanobrevibacter smithii (strain ATCC 35061 / DSM 861 / OCM 144 / PS).